The primary structure comprises 343 residues: N-acetyl-gamma-glutamyl-phosphate reductase (343 aa).

Cys147 is a catalytic residue.

It belongs to the NAGSA dehydrogenase family. Type 1 subfamily.

Its subcellular location is the cytoplasm. It catalyses the reaction N-acetyl-L-glutamate 5-semialdehyde + phosphate + NADP(+) = N-acetyl-L-glutamyl 5-phosphate + NADPH + H(+). Its pathway is amino-acid biosynthesis; L-arginine biosynthesis; N(2)-acetyl-L-ornithine from L-glutamate: step 3/4. In terms of biological role, catalyzes the NADPH-dependent reduction of N-acetyl-5-glutamyl phosphate to yield N-acetyl-L-glutamate 5-semialdehyde. This chain is N-acetyl-gamma-glutamyl-phosphate reductase, found in Listeria monocytogenes serotype 4b (strain CLIP80459).